A 453-amino-acid chain; its full sequence is Allantoinase (453 aa).

Zn(2+) contacts are provided by His-59, His-61, Lys-146, His-186, His-242, and Asp-315. Lys-146 carries the post-translational modification N6-carboxylysine.

It belongs to the metallo-dependent hydrolases superfamily. Allantoinase family. Homotetramer. It depends on Zn(2+) as a cofactor. Post-translationally, carboxylation allows a single lysine to coordinate two zinc ions.

It catalyses the reaction (S)-allantoin + H2O = allantoate + H(+). The protein operates within nitrogen metabolism; (S)-allantoin degradation; allantoate from (S)-allantoin: step 1/1. Catalyzes the conversion of allantoin (5-ureidohydantoin) to allantoic acid by hydrolytic cleavage of the five-member hydantoin ring. The protein is Allantoinase of Escherichia coli O127:H6 (strain E2348/69 / EPEC).